A 423-amino-acid chain; its full sequence is Lysosomal acid phosphatase (423 aa).

Residues 1 to 30 form the signal peptide; sequence MAGKRSGWSRAALLQLLLGVNLVVMPPTRA. Topologically, residues 31–380 are lumenal; the sequence is RSLRFVTLLY…QLASGPADTE (350 aa). Residue His-42 is the Nucleophile of the active site. Asn-92, Asn-133, Asn-167, Asn-177, Asn-191, and Asn-267 each carry an N-linked (GlcNAc...) asparagine glycan. Cystine bridges form between Cys-159–Cys-370, Cys-212–Cys-310, and Cys-345–Cys-349. Asp-287 functions as the Proton donor in the catalytic mechanism. N-linked (GlcNAc...) asparagine glycans are attached at residues Asn-322 and Asn-331. The chain crosses the membrane as a helical span at residues 381–401; it reads VIVALAVCGSILFLLIVLLLT. The Cytoplasmic segment spans residues 402 to 423; that stretch reads VLFRMQAQPPGYRHVADGEDHA.

The protein belongs to the histidine acid phosphatase family. The membrane-bound form is converted to the soluble form by sequential proteolytic processing. First, the C-terminal cytoplasmic tail is removed. Cleavage by a lysosomal protease releases the soluble form in the lysosome lumen. In terms of processing, N-glycosylated. The intermediates formed during enzymatic deglycosylation suggest that all eight predicted N-glycosylation sites are used.

It is found in the lysosome membrane. It localises to the lysosome lumen. It catalyses the reaction a phosphate monoester + H2O = an alcohol + phosphate. This is Lysosomal acid phosphatase (ACP2) from Homo sapiens (Human).